The following is a 136-amino-acid chain: Aspartate 1-decarboxylase (136 aa).

Catalysis depends on Ser-25, which acts as the Schiff-base intermediate with substrate; via pyruvic acid. Ser-25 bears the Pyruvic acid (Ser) mark. Thr-57 contacts substrate. Tyr-58 acts as the Proton donor in catalysis. Substrate is bound at residue 73-75 (GAA).

This sequence belongs to the PanD family. In terms of assembly, heterooctamer of four alpha and four beta subunits. Pyruvate serves as cofactor. Post-translationally, is synthesized initially as an inactive proenzyme, which is activated by self-cleavage at a specific serine bond to produce a beta-subunit with a hydroxyl group at its C-terminus and an alpha-subunit with a pyruvoyl group at its N-terminus.

Its subcellular location is the cytoplasm. It carries out the reaction L-aspartate + H(+) = beta-alanine + CO2. Its pathway is cofactor biosynthesis; (R)-pantothenate biosynthesis; beta-alanine from L-aspartate: step 1/1. Its function is as follows. Catalyzes the pyruvoyl-dependent decarboxylation of aspartate to produce beta-alanine. This is Aspartate 1-decarboxylase from Corynebacterium efficiens (strain DSM 44549 / YS-314 / AJ 12310 / JCM 11189 / NBRC 100395).